The following is a 173-amino-acid chain: Translation initiation factor IF-3 (173 aa).

It belongs to the IF-3 family. In terms of assembly, monomer.

The protein resides in the cytoplasm. Functionally, IF-3 binds to the 30S ribosomal subunit and shifts the equilibrium between 70S ribosomes and their 50S and 30S subunits in favor of the free subunits, thus enhancing the availability of 30S subunits on which protein synthesis initiation begins. This chain is Translation initiation factor IF-3, found in Campylobacter lari (strain RM2100 / D67 / ATCC BAA-1060).